The sequence spans 422 residues: Glycine amidinotransferase, mitochondrial (422 aa).

A mitochondrion-targeting transit peptide spans 1-37; the sequence is MLRVRCVRGGSRGAEAVHYIGSMLRKGFVGWVQRSFQ. Residues D253 and H302 contribute to the active site. C406 serves as the catalytic Amidino-cysteine intermediate.

Belongs to the amidinotransferase family. Homodimer.

It is found in the mitochondrion inner membrane. The catalysed reaction is L-arginine + glycine = guanidinoacetate + L-ornithine. It functions in the pathway amine and polyamine biosynthesis; creatine biosynthesis; creatine from L-arginine and glycine: step 1/2. Catalyzes the biosynthesis of guanidinoacetate, the immediate precursor of creatine. Creatine plays a vital role in energy metabolism in muscle tissues. May play a role in embryonic and central nervous system development. In Xenopus tropicalis (Western clawed frog), this protein is Glycine amidinotransferase, mitochondrial.